A 256-amino-acid polypeptide reads, in one-letter code: Agamous-like MADS-box protein AGL18 (256 aa).

The MADS-box domain occupies 1 to 61 (MGRGRIEIKK…GKIYDFSSVC (61 aa)). The region spanning 94 to 184 (NEAVLRNDDS…RKQVEMLGRG (91 aa)) is the K-box domain. Residues 179–232 (EMLGRGSGPKVLNERPQDSSPEADPESSSSEEDENDNEEHHSDTSLQLGLSSTG) are disordered. Over residues 199-215 (PEADPESSSSEEDENDN) the composition is skewed to acidic residues. A compositionally biased stretch (polar residues) spans 222 to 232 (TSLQLGLSSTG).

In terms of tissue distribution, mostly expressed in pollen, roots, flowers and siliques, and to a lower extent, in stems and leaves. Expressed in the endosperm and in developing male and female gametophytes. Also present in seedlings.

The protein resides in the nucleus. Its function is as follows. Probable transcription factor involved in the negative regulation of flowering, probably through the photoperiodic pathway. Prevents premature flowering. Downstream regulator of a subset of the MIKC* MADS-controlled genes required during pollen maturation. The protein is Agamous-like MADS-box protein AGL18 (AGL18) of Arabidopsis thaliana (Mouse-ear cress).